Here is a 208-residue protein sequence, read N- to C-terminus: Probable adenylyl-sulfate kinase (208 aa).

Residue 38 to 45 (GLSGSGKS) participates in ATP binding. Ser-112 acts as the Phosphoserine intermediate in catalysis.

The protein belongs to the APS kinase family.

It catalyses the reaction adenosine 5'-phosphosulfate + ATP = 3'-phosphoadenylyl sulfate + ADP + H(+). The protein operates within sulfur metabolism; hydrogen sulfide biosynthesis; sulfite from sulfate: step 2/3. Its function is as follows. Catalyzes the synthesis of activated sulfate. The protein is Probable adenylyl-sulfate kinase of Halalkalibacterium halodurans (strain ATCC BAA-125 / DSM 18197 / FERM 7344 / JCM 9153 / C-125) (Bacillus halodurans).